Consider the following 235-residue polypeptide: uncharacterized protein (235 aa).

This is an uncharacterized protein from Escherichia coli (strain K12).